We begin with the raw amino-acid sequence, 105 residues long: PTS system lactose-specific EIIA component (105 aa).

Positions 4–102 (EEMTLLGFEI…IHHLIELYKR (99 aa)) constitute a PTS EIIA type-3 domain. His-78 acts as the Tele-phosphohistidine intermediate in catalysis. His-78 is modified (phosphohistidine; by HPr). Asp-81 lines the Mg(2+) pocket.

As to quaternary structure, homotrimer. Mg(2+) serves as cofactor.

It localises to the cytoplasm. Functionally, the phosphoenolpyruvate-dependent sugar phosphotransferase system (sugar PTS), a major carbohydrate active transport system, catalyzes the phosphorylation of incoming sugar substrates concomitantly with their translocation across the cell membrane. The enzyme II LacEF PTS system is involved in lactose transport. This Lactococcus lactis subsp. lactis (Streptococcus lactis) protein is PTS system lactose-specific EIIA component.